A 59-amino-acid chain; its full sequence is Prokaryotic ubiquitin-like protein UBact (59 aa).

Residues 1 to 59 (MEMTDPLRREEKKESSPDPKEESGPSRPDVSRPGRDSLLKRMKKVDPKQSEKYKQRTGQ) form a disordered region. Gln-59 is subject to Deamidated glutamine. An Isoglutamyl lysine isopeptide (Gln-Lys) (interchain with K-? in acceptor proteins) cross-link involves residue Gln-59.

The protein belongs to the ubiquitin-like protein UBact family. Post-translationally, may be modified by deamidation of its C-terminal glutamine to glutamate by the adjacently encoded deamidase. This could be a prerequisite to the subsequent conjugation, as shown in the other prokaryotic ubiquitin-like protein Pup.

Functionally, may function as a protein modifier covalently attached to lysine residues of substrate proteins. This may serve to target the modified proteins for degradation by proteasomes. The chain is Prokaryotic ubiquitin-like protein UBact from Nitrospina gracilis (strain 3/211).